Here is a 244-residue protein sequence, read N- to C-terminus: RAD51-like protein 1 (244 aa).

Interacts with brc-2 and rad-51.

It is found in the nucleus. Its function is as follows. Has a role in the homologous recombination repair (HRR) of genomic DNA during meiosis. Required for rad-51 recruitment onto ssDNA gaps generated at stalled replication fork barriers. In Caenorhabditis briggsae, this protein is RAD51-like protein 1.